A 77-amino-acid polypeptide reads, in one-letter code: MKLIIFTGLVLFSIVSLIEAQAENEKPCLPEYKVCTHAPGNCCSDLVCDCYGRYKSGAQIGRNCFCLQKGVIYKREN.

Positions 1–20 are cleaved as a signal peptide; it reads MKLIIFTGLVLFSIVSLIEA. Residues 21 to 26 constitute a propeptide that is removed on maturation; sequence QAENEK.

It belongs to the neurotoxin 19 (CSTX) family. 08 (U8-Lctx) subfamily. In terms of processing, contains 4 disulfide bonds. In terms of tissue distribution, expressed by the venom gland.

It localises to the secreted. The chain is U8-lycotoxin-Ls1m from Lycosa singoriensis (Wolf spider).